A 523-amino-acid chain; its full sequence is ADP-ribosylation factor GTPase-activating protein 3 (523 aa).

Residues 10-126 (LAIFKRLRSV…IKTLATQATR (117 aa)) enclose the Arf-GAP domain. A C4-type zinc finger spans residues 25–48 (CFDCGAKNPSWASISYGVFLCIDC). The disordered stretch occupies residues 162-206 (GAMQASAQPESASSTPWGLETTPEKHEGGPGQGPSVEGLNTPGKA). The span at 164–177 (MQASAQPESASSTP) shows a compositional bias: polar residues. Phosphoserine is present on residues serine 231 and serine 241. A disordered region spans residues 248–269 (QAQAVDKRKEQEDLARGAPKEE). 3 positions are modified to phosphoserine: serine 270, serine 274, and serine 331. The disordered stretch occupies residues 308–424 (GFGSCRSGIS…YEPIGSTDEA (117 aa)). Over residues 314–332 (SGISHSVTSDMQTIEQESP) the composition is skewed to polar residues. Low complexity predominate over residues 348–361 (SYFSSSSKWSEQSS). Serine 377 bears the Phosphoserine mark. Positions 385–396 (YWKKDSSRDPEP) are enriched in basic and acidic residues. Residues serine 435, serine 458, serine 460, serine 462, serine 464, and serine 465 each carry the phosphoserine modification.

It localises to the cytoplasm. Its subcellular location is the golgi apparatus membrane. Its activity is regulated as follows. GAP activity stimulated by phosphatidylinositol 4,5-bisphosphate (PIP2). In terms of biological role, GTPase-activating protein (GAP) for ADP ribosylation factor 1 (ARF1). Hydrolysis of ARF1-bound GTP may lead to dissociation of coatomer from Golgi-derived membranes to allow fusion with target membranes. This Mus musculus (Mouse) protein is ADP-ribosylation factor GTPase-activating protein 3 (Arfgap3).